The following is a 969-amino-acid chain: Isoleucine--tRNA ligase (969 aa).

The 'HIGH' region signature appears at P68–H78. Residue E585 coordinates L-isoleucyl-5'-AMP. The 'KMSKS' region signature appears at K626 to S630. Residue K629 coordinates ATP. Positions 939, 942, 959, and 962 each coordinate Zn(2+).

This sequence belongs to the class-I aminoacyl-tRNA synthetase family. IleS type 1 subfamily. As to quaternary structure, monomer. Zn(2+) serves as cofactor.

It is found in the cytoplasm. It carries out the reaction tRNA(Ile) + L-isoleucine + ATP = L-isoleucyl-tRNA(Ile) + AMP + diphosphate. Its function is as follows. Catalyzes the attachment of isoleucine to tRNA(Ile). As IleRS can inadvertently accommodate and process structurally similar amino acids such as valine, to avoid such errors it has two additional distinct tRNA(Ile)-dependent editing activities. One activity is designated as 'pretransfer' editing and involves the hydrolysis of activated Val-AMP. The other activity is designated 'posttransfer' editing and involves deacylation of mischarged Val-tRNA(Ile). This is Isoleucine--tRNA ligase from Prochlorococcus marinus (strain MIT 9211).